The following is a 647-amino-acid chain: Endogenous retrovirus group K member 8 Gag polyprotein (647 aa).

Residue G2 is the site of N-myristoyl glycine attachment. Residues 165–264 form a disordered region; that stretch reads GKGPELVGPS…APPSRQGSEL (100 aa). Pro residues predominate over residues 232–247; it reads GMPPAPQGREPYPQPP. 2 CCHC-type zinc fingers span residues 544-561 and 580-597; these read GKCY…NCPV and DLCP…QCRS. The segment at 598-641 is disordered; that stretch reads KFDKNGQPLSGNEQRGQPQAPQQTGAFPIQPFVPQGFQDNNPHC. The span at 604–622 shows a compositional bias: polar residues; the sequence is QPLSGNEQRGQPQAPQQTG.

It belongs to the beta type-B retroviral Gag protein family. HERV class-II K(HML-2) gag subfamily. Post-translationally, myristoylation is essential for retroviral assembly. Alteration of the glycine residue leads to a block in the budding of particles and an accumulation of Gag inside the cell. In terms of processing, specific enzymatic cleavages may yield mature proteins.

It localises to the cell membrane. Its function is as follows. The products of the Gag polyproteins of infectious retroviruses perform highly complex orchestrated tasks during the assembly, budding, maturation, and infection stages of the viral replication cycle. During viral assembly, the proteins form membrane associations and self-associations that ultimately result in budding of an immature virion from the infected cell. Gag precursors also function during viral assembly to selectively bind and package two plus strands of genomic RNA. Endogenous Gag proteins may have kept, lost or modified their original function during evolution. This chain is Endogenous retrovirus group K member 8 Gag polyprotein (ERVK-8), found in Homo sapiens (Human).